The primary structure comprises 757 residues: RNA-directed RNA polymerase catalytic subunit (757 aa).

2 consecutive short sequence motifs (nuclear localization signal) follow at residues 187 to 195 and 203 to 216; these read RKRRVRDNM and RTIGKKKQKLNRRG. Residues 249-256 form a promoter-binding site region; the sequence is RGFVYFVE. The RdRp catalytic domain maps to 286–483; it reads VRKMMTNSQD…GINMSKKKSY (198 aa).

This sequence belongs to the influenza viruses polymerase PB1 family. In terms of assembly, influenza RNA polymerase is composed of three subunits: PB1, PB2 and PA. Interacts (via N-terminus) with PA (via C-terminus). Interacts (via C-terminus) with PB2 (via N-terminus); this interaction is essential for transcription initiation. Interacts (via C-terminus) with human PKP2 (via N-terminus); the interaction competitively inhibits the interaction between the RNA polymerase subunits PB1 and PB2. Phosphorylated by host PRKCA.

The protein localises to the host nucleus. It is found in the host cytoplasm. It catalyses the reaction RNA(n) + a ribonucleoside 5'-triphosphate = RNA(n+1) + diphosphate. Its function is as follows. RNA-dependent RNA polymerase which is responsible for replication and transcription of virus RNA segments. The transcription of viral mRNAs occurs by a unique mechanism called cap-snatching. 5' methylated caps of cellular mRNAs are cleaved after 10-13 nucleotides by PA. In turn, these short capped RNAs are used as primers by PB1 for transcription of viral mRNAs. During virus replication, PB1 initiates RNA synthesis and copy vRNA into complementary RNA (cRNA) which in turn serves as a template for the production of more vRNAs. The chain is RNA-directed RNA polymerase catalytic subunit from Aves (Human).